A 129-amino-acid polypeptide reads, in one-letter code: Flagellar assembly factor FliW 2 (129 aa).

This sequence belongs to the FliW family. Interacts with translational regulator CsrA and flagellin(s).

Its subcellular location is the cytoplasm. Functionally, acts as an anti-CsrA protein, binds CsrA and prevents it from repressing translation of its target genes, one of which is flagellin. Binds to flagellin and participates in the assembly of the flagellum. The sequence is that of Flagellar assembly factor FliW 2 from Helicobacter pylori (strain HPAG1).